The following is a 146-amino-acid chain: Outer envelope pore protein 16, chloroplastic (146 aa).

The tract at residues 1 to 73 is contains 4 beta strands; the sequence is MPRSSFSGSL…EKSLKKMCKE (73 aa). 3 helical membrane-spanning segments follow: residues 75–91, 103–119, and 128–146; these read AYWG…EYGV, AMFG…AASN, and DAIT…NYLT.

Belongs to the Tim17/Tim22/Tim23 family. Plastid outer envelope porin OEP16 (TC 1.B.30) subfamily. As to quaternary structure, homodimer and oligomers in membrane.

It localises to the plastid. It is found in the chloroplast outer membrane. The protein localises to the etioplast membrane. Functionally, voltage-dependent high-conductance channel with a slight cation-selectivity; selective for amino acids but excludes triosephosphates or uncharged sugars. Non-essential amino acid-selective channel protein and translocation pore for NADPH:protochlorophyllide oxidoreductase A (PORA) and possibly PORB. In Pisum sativum (Garden pea), this protein is Outer envelope pore protein 16, chloroplastic (OEP16).